Consider the following 503-residue polypeptide: Maturase K (503 aa).

The protein belongs to the intron maturase 2 family. MatK subfamily.

Its subcellular location is the plastid. It is found in the chloroplast. Functionally, usually encoded in the trnK tRNA gene intron. Probably assists in splicing its own and other chloroplast group II introns. The polypeptide is Maturase K (Eucalyptus globulus (Tasmanian blue gum)).